Consider the following 309-residue polypeptide: 2-phospho-L-lactate transferase (309 aa).

Asp50 and Lys89 together coordinate 7,8-didemethyl-8-hydroxy-5-deazariboflavin.

This sequence belongs to the CofD family. Homodimer. Requires Mg(2+) as cofactor.

The enzyme catalyses (2S)-lactyl-2-diphospho-5'-guanosine + 7,8-didemethyl-8-hydroxy-5-deazariboflavin = oxidized coenzyme F420-0 + GMP + H(+). It functions in the pathway cofactor biosynthesis; coenzyme F420 biosynthesis. Its function is as follows. Catalyzes the transfer of the 2-phospholactate moiety from (2S)-lactyl-2-diphospho-5'-guanosine to 7,8-didemethyl-8-hydroxy-5-deazariboflavin (FO) with the formation of oxidized coenzyme F420-0 and GMP. The chain is 2-phospho-L-lactate transferase from Methanococcus maripaludis (strain C6 / ATCC BAA-1332).